A 323-amino-acid polypeptide reads, in one-letter code: Transcription factor MYB56 (323 aa).

The segment covering 1–14 (MNPNLLEKDLRGKE) has biased composition (basic and acidic residues). The disordered stretch occupies residues 1 to 84 (MNPNLLEKDL…EKSLRMRGKS (84 aa)). Residues 27–60 (NFRSLPNSHTAACKTSLNNPSISRNHPHNKSASV) are compositionally biased toward polar residues. Residues 66–78 (EHGNERGENEKSL) show a composition bias toward basic and acidic residues. HTH myb-type domains lie at 88–139 (TKVC…FNQL) and 140–194 (DPRI…ARRT). 2 consecutive DNA-binding regions (H-T-H motif) follow at residues 116–138 (WNLI…WFNQ) and 167–190 (WALI…HVIM). The interval 192 to 217 (RRTRESQRQRQQPPPTLSRDAEMTVS) is disordered.

As to quaternary structure, forms homodimer. Interacts with the dephosphorylated active form of BES1 in the nucleus of quiescent center (QC) cells. Interacts with BPM1, BPM2, BPM3, BPM4, BPM5 and BPM6 at the promoter of FLOWERING LOCUS T (FT). Mostly expressed in flowers (at protein level) and siliques, and, to a lower extent, in roots, stems and leaves. Expressed in embryos (e.g. heart and torpedo stages) and cotyledons, and, at low levels, in roots and inflorescence. Accumulates specifically in root apical meristem quiescent center (QC) and vascular initial cells.

The protein resides in the nucleus. It localises to the cytoplasm. Its subcellular location is the cytosol. Acts as a cell-specific local repressor of quiescent center (QC) self-renewal by cell divisions in the primary root. Counteracts brassinosteroid (BR)-mediated cell division in the QC cells. Regulates maternally seed size, especially before the heart stage, promoting both endothelial cells expansion and cell number in the outer integument layer of the seed coat. Modulates the expression of genes involved in cell wall metabolism such as cell division and expansion. Negative regulator of flowering via the repression of FT transcription. The protein is Transcription factor MYB56 of Arabidopsis thaliana (Mouse-ear cress).